A 354-amino-acid chain; its full sequence is Serum paraoxonase/arylesterase 2 (354 aa).

A disulfide bridge links Cys-42 with Cys-352. Residues Asp-53 and Asp-54 each contribute to the Ca(2+) site. His-114 functions as the Proton acceptor in the catalytic mechanism. 4 residues coordinate Ca(2+): Ile-116, Asn-167, Asp-168, and Asn-223. N-linked (GlcNAc...) asparagine glycosylation is present at Asn-254. Residues Asp-268 and Asn-269 each coordinate Ca(2+). Asn-269 and Asn-323 each carry an N-linked (GlcNAc...) asparagine glycan.

The protein belongs to the paraoxonase family. Homotrimer. The cofactor is Ca(2+). Glycosylated. Post-translationally, the signal sequence is not cleaved.

The protein resides in the membrane. It catalyses the reaction a phenyl acetate + H2O = a phenol + acetate + H(+). It carries out the reaction an N-acyl-L-homoserine lactone + H2O = an N-acyl-L-homoserine + H(+). Its function is as follows. Capable of hydrolyzing lactones and a number of aromatic carboxylic acid esters. The protein is Serum paraoxonase/arylesterase 2 (PON2) of Canis lupus familiaris (Dog).